Consider the following 901-residue polypeptide: Phosphatidylinositol 3-kinase catalytic subunit type 3 (901 aa).

Positions 21–189 constitute a C2 PI3K-type domain; sequence LQTNVQVKVA…DLLFKQVTRQ (169 aa). One can recognise a PIK helical domain in the interval 302 to 527; sequence RHRQVKPNKQ…SKMYQNIQDR (226 aa). The region spanning 607–886 is the PI3K/PI4K catalytic domain; the sequence is IPDTASFFKS…QIESSLNAKM (280 aa). The segment at 613 to 619 is G-loop; that stretch reads FFKSEMM. The catalytic loop stretch occupies residues 755 to 763; sequence GLGDRHLDN. The activation loop stretch occupies residues 774–795; it reads HVDFGFILGRDPKPMPPPMKLT.

The protein belongs to the PI3/PI4-kinase family. Interacts with bec-1. May interact with dyn-1. Mn(2+) is required as a cofactor. In terms of tissue distribution, ubiquitous.

Its subcellular location is the nucleus outer membrane. It is found in the cytoplasm. It localises to the cytoplasmic granule. The protein localises to the cell projection. The protein resides in the phagocytic cup. The catalysed reaction is a 1,2-diacyl-sn-glycero-3-phospho-(1D-myo-inositol) + ATP = a 1,2-diacyl-sn-glycero-3-phospho-(1D-myo-inositol-3-phosphate) + ADP + H(+). Its activity is regulated as follows. Inhibited by wortmannin. Catalytic subunit of the PI3K complex that mediates formation of phosphatidylinositol 3-phosphate. Together with bec-1, mediates the production of phosphatidylinositol 3-phosphate on intracellular vesicles and thereby regulates membrane trafficking. Plays a role in endosome-to-Golgi retrograde transport of mig-14. Involved in clearance of apoptotic cell corpses by phagosomes. Phagosome maturation requires two sequential and non-overlapping pulses of phosphatidylinositol-3-phosphate (PI3P) on the vesicle surface which mediates recruitment of sortins snx-1 and lst-4 and small GTPases rab-5, rab-2 and rab-7, downstream of dynamin dyn-1. The first pulse is initiated by piki-1, then maintained by vps-34 which also produces the second pulse. Required for embryonic development. Together with bec-1, involved in L3/L4 larval molting stage probably by regulating cuticle shedding. Regulates the expansion of the nucleus outer membrane. Involved in the secretion and localization of lrp-1 at the apical surface of hyp7 syncytium. May regulate endocytosis in hypodermal cells. May play a role in the formation of gut granules (a lysosome-related organelle). Plays a role in germ stem cell proliferation during larval development. The chain is Phosphatidylinositol 3-kinase catalytic subunit type 3 from Caenorhabditis elegans.